The sequence spans 894 residues: Microsomal triglyceride transfer protein large subunit (894 aa).

The first 21 residues, 1–21 (MILLAVLFLCFFSSYSASVKG), serve as a signal peptide directing secretion. The Vitellogenin domain maps to 28 to 658 (LNNERLYKLT…IFQYIGKAEL (631 aa)). Residues C174 and C194 are joined by a disulfide bond.

Interacts with PRAP1. In terms of assembly, heterodimer; heterodimerizes with the protein disulfide isomerase (P4HB/PDI). Interacts with APOB. As to quaternary structure, heterodimer; heterodimerizes with the protein disulfide isomerase (P4HB/PDI). Post-translationally, cleaved by signal peptidase between residues Gln-33 and Asn-34. In terms of tissue distribution, mainly expressed in the intestine and the liver, and at lower levels in white and brown fat cells. Expressed in heart. Ubiquitous, and is the major isoform in hematopoietic cells and adipocytes.

The protein localises to the endoplasmic reticulum. Its subcellular location is the golgi apparatus. It carries out the reaction a 1,2-diacyl-sn-glycero-3-phosphocholine(in) = a 1,2-diacyl-sn-glycero-3-phosphocholine(out). The catalysed reaction is a 1,2-diacyl-sn-glycero-3-phosphoethanolamine(in) = a 1,2-diacyl-sn-glycero-3-phosphoethanolamine(out). The enzyme catalyses a cholesterol ester(in) = a cholesterol ester(out). It catalyses the reaction a triacyl-sn-glycerol(in) = a triacyl-sn-glycerol(out). In terms of biological role, catalyzes the transport of triglyceride, cholesteryl ester, and phospholipid between phospholipid surfaces. Required for the assembly and secretion of plasma lipoproteins that contain apolipoprotein B. May be involved in regulating cholesteryl ester biosynthesis in cells that produce lipoproteins. Functionally, critical for the development of natural killer T (NKT) cells. Required for the assembly and secretion of plasma lipoproteins that contain apolipoprotein B. The protein is Microsomal triglyceride transfer protein large subunit (Mttp) of Mus musculus (Mouse).